The primary structure comprises 287 residues: Phycobilisome 32.1 kDa linker polypeptide, phycocyanin-associated, rod (287 aa).

The region spanning 2–180 is the PBS-linker domain; sequence AITAAASRLG…LYRGYANSDR (179 aa). The region spanning 235-287 is the CpcD-like domain; it reads GRVYRIEVAGIRQPGYPGVRRSSTAFLVPYEQLSAKMQQLQRTGARIISVNPA.

Belongs to the phycobilisome linker protein family.

The protein resides in the cellular thylakoid membrane. Its function is as follows. Rod linker protein, associated with phycocyanin. Linker polypeptides determine the state of aggregation and the location of the disk-shaped phycobiliprotein units within the phycobilisome and modulate their spectroscopic properties in order to mediate a directed and optimal energy transfer. This chain is Phycobilisome 32.1 kDa linker polypeptide, phycocyanin-associated, rod (cpcC), found in Thermosynechococcus vestitus (strain NIES-2133 / IAM M-273 / BP-1).